The chain runs to 385 residues: MKNITILGATGSIGTQTLDVIRREKEELKLVAISANKSYKKVIEIIKEFKPKYTVLMEENAFKIVEDFCIDNKIDTKVLKGMEGMIYISTLEEVNTVVTSVVGMIGLVPTIKAIESGKDIALANKETLVVAGELVISKAKEHNVNILPVDSEHGAIFQCLRGNKKEEVKNIIVTASGGPFRGKKKEELIDVKPEHALKHPKWNMGRKISIDSATLMNKGLEVIEAHFLFGVDYENIKVVVHPQSIVHSMVEYKDGSVIAQMATPDMKLPIQYALNYPNRKESQIEPLDFYKISNLTFEKPDMDTFLPLKLAYEAGKKGGVMPAILNGANEVAVDLFLKGKIEFLQIGDLLQECMNKFYKSMEATLENVISVDKEVREYLGKKYDI.

Positions 10, 11, 12, 13, 37, and 124 each coordinate NADPH. Lys125 contacts 1-deoxy-D-xylulose 5-phosphate. Glu126 is a binding site for NADPH. Asp150 contacts Mn(2+). The 1-deoxy-D-xylulose 5-phosphate site is built by Ser151, Glu152, Ser176, and His199. Glu152 is a binding site for Mn(2+). An NADPH-binding site is contributed by Gly205. Residues Ser212, Asn217, Lys218, and Glu221 each coordinate 1-deoxy-D-xylulose 5-phosphate. Glu221 serves as a coordination point for Mn(2+).

The protein belongs to the DXR family. Mg(2+) is required as a cofactor. The cofactor is Mn(2+).

The enzyme catalyses 2-C-methyl-D-erythritol 4-phosphate + NADP(+) = 1-deoxy-D-xylulose 5-phosphate + NADPH + H(+). Its pathway is isoprenoid biosynthesis; isopentenyl diphosphate biosynthesis via DXP pathway; isopentenyl diphosphate from 1-deoxy-D-xylulose 5-phosphate: step 1/6. In terms of biological role, catalyzes the NADPH-dependent rearrangement and reduction of 1-deoxy-D-xylulose-5-phosphate (DXP) to 2-C-methyl-D-erythritol 4-phosphate (MEP). The protein is 1-deoxy-D-xylulose 5-phosphate reductoisomerase of Clostridium botulinum (strain Langeland / NCTC 10281 / Type F).